A 264-amino-acid polypeptide reads, in one-letter code: Potassium channel regulatory protein (264 aa).

In terms of domain architecture, BTB spans 5–74; the sequence is DLVTLNVGGR…LRNHELLLPS (70 aa).

As to quaternary structure, can form homooligomers. Interacts with KCNA1 (via cytoplasmic N-terminal domain) and KCNA4.

It localises to the endoplasmic reticulum. Inhibits potassium fluxes in cells. May regulate Kv1 family channel proteins by retaining a fraction of channels in endomembranes. This Mus musculus (Mouse) protein is Potassium channel regulatory protein (Kcnrg).